We begin with the raw amino-acid sequence, 124 residues long: Probable glycine cleavage system H protein (124 aa).

The Lipoyl-binding domain occupies 22–104; it reads TGRVGISEFA…FGDGWLVEID (83 aa). Position 63 is an N6-lipoyllysine (K63).

The protein belongs to the GcvH family. In terms of assembly, the glycine cleavage system is composed of four proteins: P, T, L and H. (R)-lipoate serves as cofactor.

Its function is as follows. The glycine cleavage system catalyzes the degradation of glycine. The H protein shuttles the methylamine group of glycine from the P protein to the T protein. The sequence is that of Probable glycine cleavage system H protein from Halobacterium salinarum (strain ATCC 700922 / JCM 11081 / NRC-1) (Halobacterium halobium).